A 357-amino-acid chain; its full sequence is O-methyltransferase 1, chloroplastic (357 aa).

The N-terminal 53 residues, 1-53 (MPVLPWLAAAATTPVRRSPPLPATPRALLRLPASSFPPWSNCAKSGLPPRGPF), are a transit peptide targeting the chloroplast. The tract at residues 50 to 71 (RGPFATAADTPLGGSLPEPEEE) is disordered.

This sequence belongs to the methyltransferase superfamily. LCMT family. Expressed in roots, leaf sheaths, flag leaves and panicles.

Its subcellular location is the plastid. It localises to the chloroplast. It catalyses the reaction N-acetylserotonin + S-adenosyl-L-methionine = melatonin + S-adenosyl-L-homocysteine + H(+). The protein operates within aromatic compound metabolism; melatonin biosynthesis; melatonin from serotonin: step 1/2. Functionally, involved in melatonin biosynthesis. Can function as acetylserotonin O-methyltransferase. Catalyzes the transfer of a methyl group onto N-acetylserotonin, producing melatonin (N-acetyl-5-methoxytryptamine). Involved in the regulation of jasmonate- and brassinosteroid-mediated plant growth and defense responses. The chain is O-methyltransferase 1, chloroplastic from Oryza sativa subsp. japonica (Rice).